The sequence spans 194 residues: dITP/XTP pyrophosphatase (194 aa).

Substrate is bound at residue 8 to 13 (TGNPGK). Glu-38 and Asp-67 together coordinate Mg(2+). Residue Asp-67 is the Proton acceptor of the active site. Substrate-binding positions include Ser-68, 146–149 (FGYD), Lys-169, and 174–175 (HR).

The protein belongs to the HAM1 NTPase family. In terms of assembly, homodimer. Mg(2+) serves as cofactor.

The enzyme catalyses XTP + H2O = XMP + diphosphate + H(+). It catalyses the reaction dITP + H2O = dIMP + diphosphate + H(+). It carries out the reaction ITP + H2O = IMP + diphosphate + H(+). Its function is as follows. Pyrophosphatase that catalyzes the hydrolysis of nucleoside triphosphates to their monophosphate derivatives, with a high preference for the non-canonical purine nucleotides XTP (xanthosine triphosphate), dITP (deoxyinosine triphosphate) and ITP. Seems to function as a house-cleaning enzyme that removes non-canonical purine nucleotides from the nucleotide pool, thus preventing their incorporation into DNA/RNA and avoiding chromosomal lesions. This Synechocystis sp. (strain ATCC 27184 / PCC 6803 / Kazusa) protein is dITP/XTP pyrophosphatase.